Here is a 452-residue protein sequence, read N- to C-terminus: Keratin, type II cytoskeletal 80 (452 aa).

Residues 1–82 are head; it reads MACRSCVVGF…DPAVQQLKNQ (82 aa). Phosphoserine is present on Ser-45. The coil 1A stretch occupies residues 82–118; that stretch reads QEKEEMKALNDKFASLIGKVQALEQRNQLLETRWSFL. An IF rod domain is found at 83-394; that stretch reads EKEEMKALND…KLVEGEEGRM (312 aa). Positions 119–135 are linker 1; the sequence is QGQDSAIFDLGHLYEEY. Positions 136-227 are coil 1B; the sequence is QGRLQEELRK…TIYEQELKDL (92 aa). Residues 228-251 form a linker 12 region; it reads AAQVKDVSVTVGMDSRCHIDLSGI. Positions 252–390 are coil 2; it reads VEEVKAQYDA…ATYRKLVEGE (139 aa). The tract at residues 391 to 452 is tail; it reads EGRMDSPSAT…YFSQESEVSE (62 aa). Phosphoserine is present on Ser-396. The interval 412 to 434 is disordered; that stretch reads AASRSGLSKAPSRKKKGSKGPVI.

This sequence belongs to the intermediate filament family. Heterotetramer of two type I and two type II keratins. As to expression, weakly expressed in tongue, but not skin or in any other tissues or organs examined.

In Homo sapiens (Human), this protein is Keratin, type II cytoskeletal 80 (KRT80).